A 182-amino-acid chain; its full sequence is FMN reductase (NADH) RutF (182 aa).

The protein belongs to the non-flavoprotein flavin reductase family. RutF subfamily.

It carries out the reaction FMNH2 + NAD(+) = FMN + NADH + 2 H(+). Catalyzes the reduction of FMN to FMNH2 which is used to reduce pyrimidine by RutA via the Rut pathway. The polypeptide is FMN reductase (NADH) RutF (Yersinia enterocolitica serotype O:8 / biotype 1B (strain NCTC 13174 / 8081)).